Consider the following 257-residue polypeptide: Transmembrane protein 101 (257 aa).

The next 8 helical transmembrane spans lie at Thr24–Glu40, Val52–Gly72, Trp77–Gly97, Tyr110–Leu130, Ser139–Leu159, Leu182–Leu202, Ile206–His226, and Phe233–Leu253.

The protein resides in the membrane. Its function is as follows. May activate NF-kappa-B signaling pathways. The polypeptide is Transmembrane protein 101 (Tmem101) (Mus musculus (Mouse)).